Here is a 384-residue protein sequence, read N- to C-terminus: Mitogen-activated protein kinase 8 (384 aa).

In terms of domain architecture, Protein kinase spans 26–321 (YQNLKPIGSG…VDEALQHPYI (296 aa)). ATP is bound by residues 32-40 (IGSGAQGIV) and Lys-55. Cys-116 carries the S-nitrosocysteine modification. Residue Asp-151 is the Proton acceptor of the active site. The residue at position 183 (Thr-183) is a Phosphothreonine; by MAP2K7. The TXY motif lies at 183–185 (TPY). Tyr-185 is subject to Phosphotyrosine; by MAP2K4. Ser-377 is modified (phosphoserine).

It belongs to the protein kinase superfamily. CMGC Ser/Thr protein kinase family. MAP kinase subfamily. In terms of assembly, binds to at least four scaffolding proteins, MAPK8IP1/JIP-1, MAPK8IP2/JIP-2, MAPK8IP3/JIP-3/JSAP1 and SPAG9/MAPK8IP4/JIP-4. These proteins also bind other components of the JNK signaling pathway. Forms a complex with MAPK8IP1 and ARHGEF28. Interacts with TP53 and WWOX. Interacts with JAMP. Interacts with NFATC4. Interacts with MECOM; regulates JNK signaling. Interacts with PIN1; this interaction mediates MAPK8 conformational changes leading to the binding of MAPK8 to its substrates. Interacts with HSF1 (via D domain and preferentially with hyperphosphorylated form); this interaction occurs under both normal growth conditions and immediately upon heat shock. Interacts (phosphorylated form) with NFE2; the interaction phosphorylates NFE2 in undifferentiated cells. Interacts with GRIPAP1. Interacts with POU5F1; phosphorylates POU5F1 at 'Ser-347'. Found in a complex with SH3RF1, RAC1, MAP3K11/MLK3, MAP2K7/MKK7 and MAPK8IP1/JIP1. Found in a complex with SH3RF1, RAC2, MAP3K7/TAK1, MAP2K7/MKK7, MAPK8IP1/JIP1 and MAPK9/JNK2. Mg(2+) serves as cofactor. In terms of processing, phosphorylated by TAOK2. Dually phosphorylated on Thr-183 and Tyr-185 by MAP2K7 and MAP2K4, which activates the enzyme. May be phosphorylated at Thr-183 and Tyr-185 by MAP3K1/MEKK1. Phosphorylated form is more concentrated at synapses than none-phosphorylated. In terms of tissue distribution, brain (at protein level).

It is found in the cytoplasm. It localises to the nucleus. The protein localises to the synapse. The catalysed reaction is L-seryl-[protein] + ATP = O-phospho-L-seryl-[protein] + ADP + H(+). The enzyme catalyses L-threonyl-[protein] + ATP = O-phospho-L-threonyl-[protein] + ADP + H(+). With respect to regulation, inhibited by SERPINB3. Activated by threonine and tyrosine phosphorylation by either of two dual specificity kinases, MAP2K4 and MAP2K7. MAP2K4 shows a strong preference for Tyr-185 while MAP2K7 phosphorylates Tyr-183 preferentially. Inhibited by dual specificity phosphatases, such as DUSP1. Functionally, serine/threonine-protein kinase involved in various processes such as cell proliferation, differentiation, migration, transformation and programmed cell death. Extracellular stimuli such as pro-inflammatory cytokines or physical stress stimulate the stress-activated protein kinase/c-Jun N-terminal kinase (SAP/JNK) signaling pathway. In this cascade, two dual specificity kinases MAP2K4/MKK4 and MAP2K7/MKK7 phosphorylate and activate MAPK8/JNK1. In turn, MAPK8/JNK1 phosphorylates a number of transcription factors, primarily components of AP-1 such as JUN, JDP2 and ATF2 and thus regulates AP-1 transcriptional activity. Phosphorylates the replication licensing factor CDT1, inhibiting the interaction between CDT1 and the histone H4 acetylase HBO1 to replication origins. Loss of this interaction abrogates the acetylation required for replication initiation. Promotes stressed cell apoptosis by phosphorylating key regulatory factors including p53/TP53 and Yes-associates protein YAP1. In T-cells, MAPK8 and MAPK9 are required for polarized differentiation of T-helper cells into Th1 cells. Contributes to the survival of erythroid cells by phosphorylating the antagonist of cell death BAD upon EPO stimulation. Mediates starvation-induced BCL2 phosphorylation, BCL2 dissociation from BECN1, and thus activation of autophagy. Phosphorylates STMN2 and hence regulates microtubule dynamics, controlling neurite elongation in cortical neurons. In the developing brain, through its cytoplasmic activity on STMN2, negatively regulates the rate of exit from multipolar stage and of radial migration from the ventricular zone. Phosphorylates several other substrates including heat shock factor protein 4 (HSF4), the deacetylase SIRT1, ELK1, or the E3 ligase ITCH. Phosphorylates the CLOCK-BMAL1 heterodimer and plays a role in the regulation of the circadian clock. Phosphorylates the heat shock transcription factor HSF1, suppressing HSF1-induced transcriptional activity. Phosphorylates POU5F1, which results in the inhibition of POU5F1's transcriptional activity and enhances its proteasomal degradation. Phosphorylates JUND and this phosphorylation is inhibited in the presence of MEN1. In neurons, phosphorylates SYT4 which captures neuronal dense core vesicles at synapses. Phosphorylates EIF4ENIF1/4-ET in response to oxidative stress, promoting P-body assembly. Phosphorylates SIRT6 in response to oxidative stress, stimulating its mono-ADP-ribosyltransferase activity. Phosphorylates NLRP3, promoting assembly of the NLRP3 inflammasome. Phosphorylates ALKBH5 in response to reactive oxygen species (ROS), promoting ALKBH5 sumoylation and inactivation. This chain is Mitogen-activated protein kinase 8 (Mapk8), found in Mus musculus (Mouse).